Reading from the N-terminus, the 575-residue chain is Urease subunit alpha (575 aa).

Residues 138–575 (GAVDCHVHLI…LPMAQRYFLF (438 aa)) enclose the Urease domain. Ni(2+)-binding residues include His-143, His-145, and Lys-226. N6-carboxylysine is present on Lys-226. A substrate-binding site is contributed by His-228. 2 residues coordinate Ni(2+): His-255 and His-281. The active-site Proton donor is His-329. Asp-369 contacts Ni(2+).

This sequence belongs to the metallo-dependent hydrolases superfamily. Urease alpha subunit family. In terms of assembly, heterotrimer of UreA (gamma), UreB (beta) and UreC (alpha) subunits. Three heterotrimers associate to form the active enzyme. Ni cation serves as cofactor. Post-translationally, carboxylation allows a single lysine to coordinate two nickel ions.

The protein resides in the cytoplasm. It catalyses the reaction urea + 2 H2O + H(+) = hydrogencarbonate + 2 NH4(+). It functions in the pathway nitrogen metabolism; urea degradation; CO(2) and NH(3) from urea (urease route): step 1/1. The polypeptide is Urease subunit alpha (Frankia alni (strain DSM 45986 / CECT 9034 / ACN14a)).